Consider the following 717-residue polypeptide: Pentatricopeptide repeat-containing protein At1g53600, mitochondrial (717 aa).

Residues 1 to 47 constitute a mitochondrion transit peptide; that stretch reads MVMRPISNKGLIYRHNICLRCNSTLAVSNHEPITQKTRNFLETTTTS. PPR repeat units lie at residues 49–79, 80–110, 111–142, 143–173, 176–206, 207–241, 242–272, 274–308, 309–339, 340–374, 375–401, 402–436, 437–471, 472–502, 503–537, 538–568, and 574–604; these read AIFQ…MSNR, SIVS…MPVR, VTTS…IPEK, NAVS…TPVK, DSVA…MAVK, EVVS…NVIT, WTAM…GDVK, NSNT…PLEF, DLFL…MKNK, DSVS…DMVS, WTDM…MPEK, DNIT…EVCP, NSYT…NIVN, DLSV…ISEP, NIVS…GKEP, NGVT…MKSS, and GPDH…MPCK. The segment at 609–684 is type E motif; the sequence is VWGSLLSASK…DPGSSWIILK (76 aa). Positions 685–715 are type E(+) motif; it reads GEVHNFLAGDESQLNLEEIGFTLKMIRKEME.

The protein belongs to the PPR family. PCMP-E subfamily.

It is found in the mitochondrion. The polypeptide is Pentatricopeptide repeat-containing protein At1g53600, mitochondrial (PCMP-E63) (Arabidopsis thaliana (Mouse-ear cress)).